An 86-amino-acid chain; its full sequence is Large ribosomal subunit protein bL27 (86 aa).

The interval 1-24 is disordered; the sequence is MAHKKAGGSTRNGRDSESKRLGVK.

The protein belongs to the bacterial ribosomal protein bL27 family.

This chain is Large ribosomal subunit protein bL27, found in Alcanivorax borkumensis (strain ATCC 700651 / DSM 11573 / NCIMB 13689 / SK2).